The following is a 383-amino-acid chain: Schlafen-like protein 3 (383 aa).

An SLFN-like fold region spans residues 118–266; the sequence is FDYQSNFSDV…SDKVYQISSG (149 aa). A helical membrane pass occupies residues 354–374; the sequence is LLDIQNIGWIFFGTALSFCIY.

It belongs to the Schlafen family. Component of the PUCH (precursor of 21U RNA 5'-end cleavage holoenzyme) complex; consisting of tofu-1, tofu-2 and either slfl-3 or slfl-4. Within the complex, interacts (via N-terminus) with tofu-2 (via N-terminus); the presence of tofu-1 is required for the interaction.

It is found in the mitochondrion membrane. Its function is as follows. Component of the trimeric PUCH (precursor of 21U RNA 5'-end cleavage holoenzyme) complex, that acts as an endoribonuclease processing the 5'-end of precursor Piwi-interacting RNAs (piRNAs). The PUCH complex consists of tofu-1, tofu-2 and either slfl-3 or slfl-4, where tofu-2 exhibits endoribonuclease activity. PUCH-mediated processing strictly requires a 7-methyl-G cap (m7 G-cap) and an uracil at position three (U3). PUCH also exhibits a strict bias for piRNA precursors with an A or G at position 1. Mature piRNA production is enhanced by the interaction of PUCH with the PETISCO complex, which is stabilizing piRNA precursors and allows their processing by PUCH. The sequence is that of Schlafen-like protein 3 from Caenorhabditis elegans.